We begin with the raw amino-acid sequence, 120 residues long: Large ribosomal subunit protein bL20 (120 aa).

Belongs to the bacterial ribosomal protein bL20 family.

Functionally, binds directly to 23S ribosomal RNA and is necessary for the in vitro assembly process of the 50S ribosomal subunit. It is not involved in the protein synthesizing functions of that subunit. This chain is Large ribosomal subunit protein bL20, found in Xanthobacter autotrophicus (strain ATCC BAA-1158 / Py2).